The following is a 384-amino-acid chain: Somatostatin receptor type 4 (384 aa).

Residues 1 to 34 are disordered; the sequence is MNTPATLPLGGEDTTWTPGINASWAPDEEEDAVR. At 1-41 the chain is on the extracellular side; sequence MNTPATLPLGGEDTTWTPGINASWAPDEEEDAVRSDGTGTA. Residue Asn-21 is glycosylated (N-linked (GlcNAc...) asparagine). The chain crosses the membrane as a helical span at residues 42–69; the sequence is GMVTIQCIYALVCLVGLVGNALVIFVIL. Topologically, residues 70–79 are cytoplasmic; it reads RYAKMKTATN. The chain crosses the membrane as a helical span at residues 80-105; that stretch reads IYLLNLAVADELFMLSVPFVASAAAL. Over 106–116 the chain is Extracellular; the sequence is RHWPFGAVLCR. A disulfide bond links Cys-115 and Cys-194. The helical transmembrane segment at 117–138 threads the bilayer; the sequence is AVLSVDGLNMFTSVFCLTVLSV. Residues 139–160 are Cytoplasmic-facing; that stretch reads DRYVAVVHPLRAATYRRPSVAK. The helical transmembrane segment at 161–181 threads the bilayer; that stretch reads LINLGVWLASLLVTLPIAVFA. Topologically, residues 182 to 203 are extracellular; sequence DTRPARGGEAVACNLHWPHPAW. A helical membrane pass occupies residues 204-228; sequence SAVFVIYTFLLGFLLPVLAIGLCYL. At 229–254 the chain is on the cytoplasmic side; it reads LIVGKMRAVALRAGWQQRRRSEKKIT. The helical transmembrane segment at 255–280 threads the bilayer; sequence RLVLMVVTVFVLCWMPFYVVQLLNLF. The Extracellular portion of the chain corresponds to 281-287; sequence VTSLDAT. The chain crosses the membrane as a helical span at residues 288-311; sequence VNHVSLILSYANSCANPILYGFLS. At 312-384 the chain is on the cytoplasmic side; that stretch reads DNFRRSFQRV…RVPFTKTTTF (73 aa). Cys-323 carries S-palmitoyl cysteine lipidation.

Belongs to the G-protein coupled receptor 1 family. As to expression, brain, lung, heart and islets. Moderate levels in the hippocampus, cortex and olfactory bulb.

It is found in the cell membrane. Its function is as follows. Receptor for somatostatin-14. The activity of this receptor is mediated by G proteins which inhibits adenylyl cyclase. It is functionally coupled not only to inhibition of adenylate cyclase, but also to activation of both arachidonate release and mitogen-activated protein (MAP) kinase cascade. The protein is Somatostatin receptor type 4 (Sstr4) of Rattus norvegicus (Rat).